Consider the following 146-residue polypeptide: MSYCKIEAPYPTAEAGEKRIIFALDPKGDEAEQEQYMLQLIPGRVLEMSRNDAANHQTLGGSIEQHTVEGWGAKFFHVKLAKQAASTLMHVHDEDHSEKVRKFVAMPNPPLFPYRSRCPVVVYLPNDAELRYGIWCGGQQMQAVTE.

This sequence belongs to the protease inhibitor I11 (ecotin) family.

This Leishmania infantum protein is Ecotin-like protein 1 (ISP1).